A 221-amino-acid polypeptide reads, in one-letter code: Telomere repeats-binding bouquet formation protein 2 (221 aa).

The protein belongs to the TERB2 family. Component of the MAJIN-TERB1-TERB2 complex, composed of MAJIN, TERB1 and TERB2.

The protein localises to the chromosome. It localises to the telomere. The protein resides in the nucleus inner membrane. In terms of biological role, meiosis-specific telomere-associated protein involved in meiotic telomere attachment to the nucleus inner membrane, a crucial step for homologous pairing and synapsis. Component of the MAJIN-TERB1-TERB2 complex, which promotes telomere cap exchange by mediating attachment of telomeric DNA to the inner nuclear membrane and replacement of the protective cap of telomeric chromosomes: in early meiosis, the MAJIN-TERB1-TERB2 complex associates with telomeric DNA and the shelterin/telosome complex. During prophase, the complex matures and promotes release of the shelterin/telosome complex from telomeric DNA. This chain is Telomere repeats-binding bouquet formation protein 2, found in Bos taurus (Bovine).